We begin with the raw amino-acid sequence, 164 residues long: Succinate dehydrogenase assembly factor 2, mitochondrial (164 aa).

Residues 1-27 (MAVVTLIPTLARVLSKHSLLSPLLSVT) constitute a mitochondrion transit peptide.

This sequence belongs to the SDHAF2 family. As to quaternary structure, interacts with SDHA within the SDH catalytic dimer.

The protein localises to the mitochondrion matrix. Functionally, plays an essential role in the assembly of succinate dehydrogenase (SDH), an enzyme complex (also referred to as respiratory complex II) that is a component of both the tricarboxylic acid (TCA) cycle and the mitochondrial electron transport chain, and which couples the oxidation of succinate to fumarate with the reduction of ubiquinone (coenzyme Q) to ubiquinol. Required for flavinylation (covalent attachment of FAD) of the flavoprotein subunit SDHA of the SDH catalytic dimer. In Rattus norvegicus (Rat), this protein is Succinate dehydrogenase assembly factor 2, mitochondrial.